A 380-amino-acid chain; its full sequence is Bifunctional enzyme IspD/IspF (380 aa).

Residues 1–224 (MTIPATYAAI…ERILGDAMDI (224 aa)) are 2-C-methyl-D-erythritol 4-phosphate cytidylyltransferase. A 2-C-methyl-D-erythritol 2,4-cyclodiphosphate synthase region spans residues 225 to 380 (RLGNGFDVHA…SIATATLVKG (156 aa)). Residues D231 and H233 each contribute to the a divalent metal cation site. 4-CDP-2-C-methyl-D-erythritol 2-phosphate contacts are provided by residues 231 to 233 (DVH) and 257 to 258 (HS). H265 is a binding site for a divalent metal cation. 4-CDP-2-C-methyl-D-erythritol 2-phosphate is bound by residues 279–281 (DIG), 355–358 (TTSE), F362, and R365.

In the N-terminal section; belongs to the IspD/TarI cytidylyltransferase family. IspD subfamily. This sequence in the C-terminal section; belongs to the IspF family. It depends on a divalent metal cation as a cofactor.

The catalysed reaction is 2-C-methyl-D-erythritol 4-phosphate + CTP + H(+) = 4-CDP-2-C-methyl-D-erythritol + diphosphate. The enzyme catalyses 4-CDP-2-C-methyl-D-erythritol 2-phosphate = 2-C-methyl-D-erythritol 2,4-cyclic diphosphate + CMP. Its pathway is isoprenoid biosynthesis; isopentenyl diphosphate biosynthesis via DXP pathway; isopentenyl diphosphate from 1-deoxy-D-xylulose 5-phosphate: step 2/6. It functions in the pathway isoprenoid biosynthesis; isopentenyl diphosphate biosynthesis via DXP pathway; isopentenyl diphosphate from 1-deoxy-D-xylulose 5-phosphate: step 4/6. Its function is as follows. Bifunctional enzyme that catalyzes the formation of 4-diphosphocytidyl-2-C-methyl-D-erythritol from CTP and 2-C-methyl-D-erythritol 4-phosphate (MEP) (IspD), and catalyzes the conversion of 4-diphosphocytidyl-2-C-methyl-D-erythritol 2-phosphate (CDP-ME2P) to 2-C-methyl-D-erythritol 2,4-cyclodiphosphate (ME-CPP) with a corresponding release of cytidine 5-monophosphate (CMP) (IspF). This chain is Bifunctional enzyme IspD/IspF, found in Paracoccus denitrificans (strain Pd 1222).